A 188-amino-acid polypeptide reads, in one-letter code: F-box only protein 36 (188 aa).

The 47-residue stretch at 91–137 folds into the F-box domain; the sequence is FDYLERLSDRLLLKIICYLDLEDIASLSQTSSKFEKLCKSDLLWEQI.

Directly interacts with SKP1 and CUL1.

Its function is as follows. Substrate-recognition component of the SCF (SKP1-CUL1-F-box protein)-type E3 ubiquitin ligase complex. The chain is F-box only protein 36 (Fbxo36) from Mus musculus (Mouse).